The primary structure comprises 308 residues: Tryptophan 2,3-dioxygenase (308 aa).

The interval 1-35 is disordered; sequence MQPPGDNAPAGCPFSGAHAAQPAHEAPHVPGDAAG. Residues 17 to 30 show a composition bias toward low complexity; the sequence is AHAAQPAHEAPHVP. Residues 77–81, Y139, and R143 each bind substrate; that span reads FIIQH. H266 serves as a coordination point for heme. T280 is a binding site for substrate.

This sequence belongs to the tryptophan 2,3-dioxygenase family. As to quaternary structure, homotetramer. Heme is required as a cofactor.

The catalysed reaction is L-tryptophan + O2 = N-formyl-L-kynurenine. It participates in amino-acid degradation; L-tryptophan degradation via kynurenine pathway; L-kynurenine from L-tryptophan: step 1/2. Heme-dependent dioxygenase that catalyzes the oxidative cleavage of the L-tryptophan (L-Trp) pyrrole ring and converts L-tryptophan to N-formyl-L-kynurenine. Catalyzes the oxidative cleavage of the indole moiety. The protein is Tryptophan 2,3-dioxygenase of Burkholderia ambifaria (strain ATCC BAA-244 / DSM 16087 / CCUG 44356 / LMG 19182 / AMMD) (Burkholderia cepacia (strain AMMD)).